Here is a 215-residue protein sequence, read N- to C-terminus: uncharacterized protein (215 aa).

S-adenosyl-L-methionine-binding residues include Gly53, Glu74, and Asp97.

This sequence belongs to the methyltransferase superfamily. YrrT family.

Its function is as follows. Could be a S-adenosyl-L-methionine-dependent methyltransferase. This is an uncharacterized protein from Geobacillus kaustophilus (strain HTA426).